Consider the following 250-residue polypeptide: uncharacterized protein (250 aa).

This is an uncharacterized protein from Rickettsia prowazekii (strain Madrid E).